Here is a 434-residue protein sequence, read N- to C-terminus: 3-phosphoshikimate 1-carboxyvinyltransferase (434 aa).

3-phosphoshikimate-binding residues include Lys15, Ser16, and Arg20. Lys15 contributes to the phosphoenolpyruvate binding site. Gly96 and Arg124 together coordinate phosphoenolpyruvate. Residues Ser169, Gln171, Ser195, Asp319, and Lys346 each contribute to the 3-phosphoshikimate site. Residue Gln171 participates in phosphoenolpyruvate binding. Residue Asp319 is the Proton acceptor of the active site. 2 residues coordinate phosphoenolpyruvate: Arg350 and Arg394.

Belongs to the EPSP synthase family. Monomer.

The protein resides in the cytoplasm. It catalyses the reaction 3-phosphoshikimate + phosphoenolpyruvate = 5-O-(1-carboxyvinyl)-3-phosphoshikimate + phosphate. The protein operates within metabolic intermediate biosynthesis; chorismate biosynthesis; chorismate from D-erythrose 4-phosphate and phosphoenolpyruvate: step 6/7. Catalyzes the transfer of the enolpyruvyl moiety of phosphoenolpyruvate (PEP) to the 5-hydroxyl of shikimate-3-phosphate (S3P) to produce enolpyruvyl shikimate-3-phosphate and inorganic phosphate. The sequence is that of 3-phosphoshikimate 1-carboxyvinyltransferase from Chlorobium phaeobacteroides (strain DSM 266 / SMG 266 / 2430).